The chain runs to 111 residues: Aspartate 1-decarboxylase (111 aa).

Catalysis depends on S25, which acts as the Schiff-base intermediate with substrate; via pyruvic acid. Position 25 is a pyruvic acid (Ser) (S25). T57 contacts substrate. Catalysis depends on Y58, which acts as the Proton donor. 73–75 (GPA) provides a ligand contact to substrate.

The protein belongs to the PanD family. As to quaternary structure, heterooctamer of four alpha and four beta subunits. Pyruvate serves as cofactor. Post-translationally, is synthesized initially as an inactive proenzyme, which is activated by self-cleavage at a specific serine bond to produce a beta-subunit with a hydroxyl group at its C-terminus and an alpha-subunit with a pyruvoyl group at its N-terminus.

The protein localises to the cytoplasm. It carries out the reaction L-aspartate + H(+) = beta-alanine + CO2. Its pathway is cofactor biosynthesis; (R)-pantothenate biosynthesis; beta-alanine from L-aspartate: step 1/1. Its function is as follows. Catalyzes the pyruvoyl-dependent decarboxylation of aspartate to produce beta-alanine. This Francisella tularensis subsp. novicida (strain U112) protein is Aspartate 1-decarboxylase.